The following is a 434-amino-acid chain: Glutamyl-tRNA reductase (434 aa).

Substrate-binding positions include 52–55 (TCNR), S115, 120–122 (ETQ), and Q126. C53 serves as the catalytic Nucleophile. 195-200 (GAGEMI) provides a ligand contact to NADP(+).

It belongs to the glutamyl-tRNA reductase family. In terms of assembly, homodimer.

The enzyme catalyses (S)-4-amino-5-oxopentanoate + tRNA(Glu) + NADP(+) = L-glutamyl-tRNA(Glu) + NADPH + H(+). It functions in the pathway porphyrin-containing compound metabolism; protoporphyrin-IX biosynthesis; 5-aminolevulinate from L-glutamyl-tRNA(Glu): step 1/2. Catalyzes the NADPH-dependent reduction of glutamyl-tRNA(Glu) to glutamate 1-semialdehyde (GSA). This Cupriavidus necator (strain ATCC 17699 / DSM 428 / KCTC 22496 / NCIMB 10442 / H16 / Stanier 337) (Ralstonia eutropha) protein is Glutamyl-tRNA reductase.